Reading from the N-terminus, the 590-residue chain is Mitochondrial distribution and morphology protein 34 (590 aa).

Residues 1–225 enclose the SMP-LTD domain; that stretch reads MSFIFNRETF…LPSVIFNMSQ (225 aa). Residues 393-405 are compositionally biased toward basic residues; the sequence is RRKIKMRSRKPSK. The tract at residues 393 to 456 is disordered; it reads RRKIKMRSRK…APEGGPNAED (64 aa). Residues 413–427 are compositionally biased toward polar residues; it reads PAQNDSGTSSCSNVA.

This sequence belongs to the MDM34 family. As to quaternary structure, component of the ER-mitochondria encounter structure (ERMES) or MDM complex, composed of MMM1, MDM10, MDM12 and MDM34.

The protein localises to the mitochondrion outer membrane. Component of the ERMES/MDM complex, which serves as a molecular tether to connect the endoplasmic reticulum (ER) and mitochondria. Components of this complex are involved in the control of mitochondrial shape and protein biogenesis, and function in nonvesicular lipid trafficking between the ER and mitochondria. MDM34 is required for the interaction of the ER-resident membrane protein MMM1 and the outer mitochondrial membrane-resident beta-barrel protein MDM10. This chain is Mitochondrial distribution and morphology protein 34, found in Eremothecium gossypii (strain ATCC 10895 / CBS 109.51 / FGSC 9923 / NRRL Y-1056) (Yeast).